An 84-amino-acid polypeptide reads, in one-letter code: ATP synthase subunit c (84 aa).

2 consecutive transmembrane segments (helical) span residues 8–28 (VAGM…GGGI) and 56–76 (IIGS…AILL).

It belongs to the ATPase C chain family. As to quaternary structure, F-type ATPases have 2 components, F(1) - the catalytic core - and F(0) - the membrane proton channel. F(1) has five subunits: alpha(3), beta(3), gamma(1), delta(1), epsilon(1). F(0) has three main subunits: a(1), b(2) and c(10-14). The alpha and beta chains form an alternating ring which encloses part of the gamma chain. F(1) is attached to F(0) by a central stalk formed by the gamma and epsilon chains, while a peripheral stalk is formed by the delta and b chains.

It is found in the cell membrane. F(1)F(0) ATP synthase produces ATP from ADP in the presence of a proton or sodium gradient. F-type ATPases consist of two structural domains, F(1) containing the extramembraneous catalytic core and F(0) containing the membrane proton channel, linked together by a central stalk and a peripheral stalk. During catalysis, ATP synthesis in the catalytic domain of F(1) is coupled via a rotary mechanism of the central stalk subunits to proton translocation. Functionally, key component of the F(0) channel; it plays a direct role in translocation across the membrane. A homomeric c-ring of between 10-14 subunits forms the central stalk rotor element with the F(1) delta and epsilon subunits. The sequence is that of ATP synthase subunit c from Clostridium novyi (strain NT).